The primary structure comprises 199 residues: ATP synthase subunit a (199 aa).

The next 6 helical transmembrane spans lie at 2 to 22, 25 to 45, 53 to 73, 80 to 100, 143 to 163, and 164 to 184; these read TNVY…LFYF, SMLG…FSYT, VISV…YFMY, MIEF…LTFI, VNVL…ELYL, and GIFY…VFFI.

It belongs to the ATPase A chain family. F-type ATPases have 2 components, CF(1) - the catalytic core - and CF(0) - the membrane proton channel. CF(1) has five subunits: alpha(3), beta(3), gamma(1), delta(1), epsilon(1). CF(0) has three main subunits: a, b and c.

The protein resides in the mitochondrion inner membrane. Mitochondrial membrane ATP synthase (F(1)F(0) ATP synthase or Complex V) produces ATP from ADP in the presence of a proton gradient across the membrane which is generated by electron transport complexes of the respiratory chain. F-type ATPases consist of two structural domains, F(1) - containing the extramembraneous catalytic core and F(0) - containing the membrane proton channel, linked together by a central stalk and a peripheral stalk. During catalysis, ATP synthesis in the catalytic domain of F(1) is coupled via a rotary mechanism of the central stalk subunits to proton translocation. Key component of the proton channel; it may play a direct role in the translocation of protons across the membrane. The sequence is that of ATP synthase subunit a (ATP6) from Ascaris suum (Pig roundworm).